The primary structure comprises 192 residues: Peptidyl-tRNA hydrolase (192 aa).

Tyrosine 14 contributes to the tRNA binding site. Histidine 19 acts as the Proton acceptor in catalysis. TRNA-binding residues include tyrosine 61, asparagine 63, and asparagine 107.

The protein belongs to the PTH family. Monomer.

Its subcellular location is the cytoplasm. It carries out the reaction an N-acyl-L-alpha-aminoacyl-tRNA + H2O = an N-acyl-L-amino acid + a tRNA + H(+). Its function is as follows. Hydrolyzes ribosome-free peptidyl-tRNAs (with 1 or more amino acids incorporated), which drop off the ribosome during protein synthesis, or as a result of ribosome stalling. Catalyzes the release of premature peptidyl moieties from peptidyl-tRNA molecules trapped in stalled 50S ribosomal subunits, and thus maintains levels of free tRNAs and 50S ribosomes. This is Peptidyl-tRNA hydrolase from Wolinella succinogenes (strain ATCC 29543 / DSM 1740 / CCUG 13145 / JCM 31913 / LMG 7466 / NCTC 11488 / FDC 602W) (Vibrio succinogenes).